Consider the following 587-residue polypeptide: Aspartate--tRNA ligase (587 aa).

Residue glutamate 175 participates in L-aspartate binding. The interval 199-202 (QQFK) is aspartate. Positions 221 and 446 each coordinate L-aspartate. 221–223 (RDE) is a binding site for ATP. Glutamate 480 contacts ATP. Residue arginine 487 coordinates L-aspartate. 532-535 (GVDR) contacts ATP.

It belongs to the class-II aminoacyl-tRNA synthetase family. Type 1 subfamily. In terms of assembly, homodimer.

It is found in the cytoplasm. The catalysed reaction is tRNA(Asp) + L-aspartate + ATP = L-aspartyl-tRNA(Asp) + AMP + diphosphate. Catalyzes the attachment of L-aspartate to tRNA(Asp) in a two-step reaction: L-aspartate is first activated by ATP to form Asp-AMP and then transferred to the acceptor end of tRNA(Asp). The protein is Aspartate--tRNA ligase of Streptomyces avermitilis (strain ATCC 31267 / DSM 46492 / JCM 5070 / NBRC 14893 / NCIMB 12804 / NRRL 8165 / MA-4680).